The primary structure comprises 312 residues: Retinol dehydrogenase 8 (312 aa).

Position 9–18 (9–18 (LISGCSSGIG)) interacts with NADP(+). The next 3 helical transmembrane spans lie at 87–107 (VLVNNAGVGLVGPLEGLSLAA), 138–158 (IVVVSSVMGLQGVVFNEVYAA), and 170–190 (LAVQLLQFNIFISLVEPGPVV). Position 143 (Ser-143) interacts with substrate. Tyr-156 (proton acceptor) is an active-site residue.

This sequence belongs to the short-chain dehydrogenases/reductases (SDR) family. Detected in photoreceptor outer segments in the retina (at protein level).

The protein resides in the membrane. The catalysed reaction is all-trans-retinol + NADP(+) = all-trans-retinal + NADPH + H(+). In terms of biological role, retinol dehydrogenase with a clear preference for NADP. Converts all-trans-retinal to all-trans-retinol. May play a role in the regeneration of visual pigment at high light intensity. The chain is Retinol dehydrogenase 8 (RDH8) from Bos taurus (Bovine).